The following is a 247-amino-acid chain: Triosephosphate isomerase (247 aa).

Positions 10 and 12 each coordinate substrate. Histidine 94 serves as the catalytic Electrophile. The active-site Proton acceptor is glutamate 164.

The protein belongs to the triosephosphate isomerase family. In terms of assembly, homodimer.

It localises to the cytoplasm. It catalyses the reaction D-glyceraldehyde 3-phosphate = dihydroxyacetone phosphate. The enzyme catalyses dihydroxyacetone phosphate = methylglyoxal + phosphate. Its pathway is carbohydrate biosynthesis; gluconeogenesis. It functions in the pathway carbohydrate degradation; glycolysis; D-glyceraldehyde 3-phosphate from glycerone phosphate: step 1/1. Triosephosphate isomerase is an extremely efficient metabolic enzyme that catalyzes the interconversion between dihydroxyacetone phosphate (DHAP) and D-glyceraldehyde-3-phosphate (G3P) in glycolysis and gluconeogenesis. In terms of biological role, it is also responsible for the non-negligible production of methylglyoxal a reactive cytotoxic side-product that modifies and can alter proteins, DNA and lipids. The chain is Triosephosphate isomerase (tpi-1) from Caenorhabditis elegans.